The chain runs to 235 residues: Transcriptional regulatory protein WalR (235 aa).

One can recognise a Response regulatory domain in the interval 4 to 117; it reads KILVVDDEKP…ELLARVKANL (114 aa). D53 is modified (4-aspartylphosphate). Positions 132–231 form a DNA-binding region, ompR/PhoB-type; it reads SNEIHIGSLV…RRGVGYYLRN (100 aa).

As to quaternary structure, homodimer. In terms of processing, phosphorylated by WalK.

Its subcellular location is the cytoplasm. Functionally, member of the two-component regulatory system WalK/WalR involved in the regulation of the ftsAZ operon, the yocH, ykvT, cwlO, lytE, ydjM, yjeA, yoeB genes and the tagAB and tagDEF operons. Binds to the ftsAZ P1 promoter sequence in vitro. WalR has been shown to directly bind to the regulatory regions of yocH, ykvT, tagAB/tagDEF. Activates cwlO, lytE and ydjM and represses yoeB and yjeA. This chain is Transcriptional regulatory protein WalR, found in Bacillus subtilis (strain 168).